The primary structure comprises 98 residues: ATP-dependent Clp protease adapter protein ClpS (98 aa).

It belongs to the ClpS family. In terms of assembly, binds to the N-terminal domain of the chaperone ClpA.

In terms of biological role, involved in the modulation of the specificity of the ClpAP-mediated ATP-dependent protein degradation. This chain is ATP-dependent Clp protease adapter protein ClpS, found in Synechocystis sp. (strain ATCC 27184 / PCC 6803 / Kazusa).